Reading from the N-terminus, the 190-residue chain is Peptidyl-tRNA hydrolase (190 aa).

Residue Y14 participates in tRNA binding. The active-site Proton acceptor is the H19. The tRNA site is built by Y64, N66, and N112.

The protein belongs to the PTH family. Monomer.

The protein localises to the cytoplasm. It catalyses the reaction an N-acyl-L-alpha-aminoacyl-tRNA + H2O = an N-acyl-L-amino acid + a tRNA + H(+). Hydrolyzes ribosome-free peptidyl-tRNAs (with 1 or more amino acids incorporated), which drop off the ribosome during protein synthesis, or as a result of ribosome stalling. Its function is as follows. Catalyzes the release of premature peptidyl moieties from peptidyl-tRNA molecules trapped in stalled 50S ribosomal subunits, and thus maintains levels of free tRNAs and 50S ribosomes. The chain is Peptidyl-tRNA hydrolase from Chlorobaculum parvum (strain DSM 263 / NCIMB 8327) (Chlorobium vibrioforme subsp. thiosulfatophilum).